Here is a 104-residue protein sequence, read N- to C-terminus: Small ribosomal subunit protein bS18 (104 aa).

The span at methionine 1–glutamate 14 shows a compositional bias: basic and acidic residues. A disordered region spans residues methionine 1 to glutamate 25.

The protein belongs to the bacterial ribosomal protein bS18 family. Part of the 30S ribosomal subunit. Forms a tight heterodimer with protein bS6.

Its function is as follows. Binds as a heterodimer with protein bS6 to the central domain of the 16S rRNA, where it helps stabilize the platform of the 30S subunit. In Mycoplasma pneumoniae (strain ATCC 29342 / M129 / Subtype 1) (Mycoplasmoides pneumoniae), this protein is Small ribosomal subunit protein bS18.